The chain runs to 144 residues: uncharacterized protein (144 aa).

This is an uncharacterized protein from Methanocaldococcus jannaschii (strain ATCC 43067 / DSM 2661 / JAL-1 / JCM 10045 / NBRC 100440) (Methanococcus jannaschii).